A 591-amino-acid polypeptide reads, in one-letter code: Metalloendopeptidase OPG085 (591 aa).

His-41 contributes to the Zn(2+) binding site. Glu-44 is an active-site residue. Zn(2+)-binding residues include His-45 and Glu-112.

This sequence belongs to the peptidase M44 family. Zn(2+) is required as a cofactor. In terms of processing, undergoes proteolytic processing during the course of infection. May be cleaved into 46 kDa and 22 kDa products (Potential).

The protein localises to the virion. Functionally, probably involved in maturation of some viral proteins by processing them preferentially at Ala-Gly-|-Ser/Thr/Lys motifs. Does not seem to be responsible for the cleavage of major core proteins. The polypeptide is Metalloendopeptidase OPG085 (OPG085) (Variola virus (isolate Human/India/Ind3/1967) (VARV)).